Reading from the N-terminus, the 161-residue chain is Small ribosomal subunit protein uS9 (161 aa).

Residues M1–Y38 form a disordered region. Positions Q27–Y38 are enriched in basic and acidic residues.

Belongs to the universal ribosomal protein uS9 family.

The chain is Small ribosomal subunit protein uS9 from Rhodospirillum centenum (strain ATCC 51521 / SW).